Consider the following 151-residue polypeptide: Transcriptional repressor NrdR (151 aa).

A zinc finger spans residues 3-34 (CPHCGNCDDKVMESRTLAQGDCIRRRRECLAC). The 93-residue stretch at 49–141 (FMVIKKDGRR…VYKQFSNLDE (93 aa)) folds into the ATP-cone domain.

It belongs to the NrdR family. It depends on Zn(2+) as a cofactor.

Functionally, negatively regulates transcription of bacterial ribonucleotide reductase nrd genes and operons by binding to NrdR-boxes. This is Transcriptional repressor NrdR from Treponema denticola (strain ATCC 35405 / DSM 14222 / CIP 103919 / JCM 8153 / KCTC 15104).